Consider the following 207-residue polypeptide: Fibroblast growth factor 18 (207 aa).

A signal peptide spans 1–27; it reads MYSAPSACTCLCLHFLLLCFQVQVLAA. Asn39 carries N-linked (GlcNAc...) asparagine glycosylation. Cys109 and Cys127 are disulfide-bonded. The N-linked (GlcNAc...) asparagine glycan is linked to Asn137.

Belongs to the heparin-binding growth factors family. Interacts with FGFR3 and FGFR4.

It is found in the secreted. Its function is as follows. Plays an important role in the regulation of cell proliferation, cell differentiation and cell migration. Required for normal ossification and bone development. Stimulates hepatic and intestinal proliferation. This Mus musculus (Mouse) protein is Fibroblast growth factor 18 (Fgf18).